A 153-amino-acid chain; its full sequence is Ergochrome gene cluster protein CPUR_05425 (153 aa).

The protein operates within pigment biosynthesis. Part of the ergochrome gene cluster responsible for the typical purple-black color of the ergot sclerotia. The ergochrome gene cluster produces several ergot pigments including the yellow ergochrome secalonic acid and its derivatives, as well as the red anthraquinones endocrocin and clavorubin. The pathway begins with the synthesis of atrochrysone thioester by the polyketide synthase (PKS) CPUR_05437. The atrochrysone carboxyl ACP thioesterase CPUR_05436 then breaks the thioester bond and releases the atrochrysone carboxylic acid from CPUR_05437. The atrochrysone carboxylic acid is then converted to atrochrysone which is further transformed into emodin anthrone. The next step is performed by the anthrone oxygenase CPUR_05434 that catalyzes the oxidation of emodinanthrone to emodin. Emodin is further modified to yield monodictyphenone via several steps involving CPUR_05427, CPUR_05428, CPUR_05429 and CPUR_05430. The short chain dehydrogenase/reductase CPUR_05418 then catalyzes the C-5 ketoreduction to give the xanthone skeleton of the monomeric units. Ergochromes formation requires further dimerization steps of different xanthone units, probably catalyzed by the cytochrome P450 monooxygenase CPUR_05419. CPUR_05425, CPUR_05426 and CPUR_05431 are unique to Claviceps, thus it is likely that they are involved in further modification of xanthone units or in their dimerization. The yellow ergochromes and the red anthraquinone pigments endocrocin and clavorubin are products from the same PKS derived precursors and the latter are likely shunt products in the pathway of xanthone biosynthesis. It is proposed that atrochrysone carboxylic acid released from the PKS CPUR_05437 can also be converted to endocrocin anthrone which is further oxidized into endocrocin by CPUR_05435. Endocrocin could be then modified to clavorubin, possibly by CPUR_05423 and CPUR_05431. Clavorubin is the principal anthraquinone metabolite produced by the cluster with a much higher yield compared to endocrocin. The chain is Ergochrome gene cluster protein CPUR_05425 from Claviceps purpurea (strain 20.1) (Ergot fungus).